We begin with the raw amino-acid sequence, 334 residues long: YbbR-like domain-containing protein BB_0009 (334 aa).

Residues 22–38 traverse the membrane as a helical segment; it reads AISILIAILMFVAFNFN. YbbR-like domains follow at residues 43-128 and 138-220; these read ITTE…NVLL and VKIE…VVNI.

The protein localises to the membrane. The sequence is that of YbbR-like domain-containing protein BB_0009 from Borreliella burgdorferi (strain ATCC 35210 / DSM 4680 / CIP 102532 / B31) (Borrelia burgdorferi).